The following is an 89-amino-acid chain: Cell division topological specificity factor (89 aa).

The protein belongs to the MinE family.

Prevents the cell division inhibition by proteins MinC and MinD at internal division sites while permitting inhibition at polar sites. This ensures cell division at the proper site by restricting the formation of a division septum at the midpoint of the long axis of the cell. The chain is Cell division topological specificity factor from Yersinia pestis bv. Antiqua (strain Angola).